The following is a 492-amino-acid chain: Catalase isozyme 1 (492 aa).

Catalysis depends on residues His65 and Asn138. Position 348 (Tyr348) interacts with heme.

Belongs to the catalase family. In terms of assembly, homotetramer. Heme serves as cofactor.

Its subcellular location is the cytoplasm. It localises to the cytosol. The protein localises to the peroxisome matrix. The catalysed reaction is 2 H2O2 = O2 + 2 H2O. With respect to regulation, inhibited by salicylic acid. In terms of biological role, catalyzes the degradation of hydrogen peroxide (H(2)O(2)) generated by peroxisomal oxidases to water and oxygen, thereby protecting cells from the toxic effects of hydrogen peroxide. The protein is Catalase isozyme 1 (CAT-1) of Nicotiana tabacum (Common tobacco).